A 369-amino-acid polypeptide reads, in one-letter code: DNA replication and repair protein RecF (369 aa).

30-37 lines the ATP pocket; it reads GDNAQGKT.

The protein belongs to the RecF family.

Its subcellular location is the cytoplasm. Functionally, the RecF protein is involved in DNA metabolism; it is required for DNA replication and normal SOS inducibility. RecF binds preferentially to single-stranded, linear DNA. It also seems to bind ATP. The protein is DNA replication and repair protein RecF of Streptococcus equi subsp. zooepidemicus (strain MGCS10565).